The following is a 337-amino-acid chain: MRPTLLWSLLLLLGVFAAAAAAPPDPLSQLPAPQHPKIRLYNAEQVLSWEPVALSNSTRPVVYQVQFKYTDSKWFTADIMSIGVNCTQITATECDFTAASPSAGFPMDFNVTLRLRAELGALHSAWVTMPWFQHYRNVTVGPPENIEVTPGEGSLIIRFSSPFDIADTSTAFFCYYVHYWEKGGIQQVKGPFRSNSISLDNLKPSRVYCLQVQAQLLWNKSNIFRVGHLSNISCYETMADASTELQQVILISVGTFSLLSVLAGACFFLVLKYRGLIKYWFHTPPSIPLQIEEYLKDPTQPILEALDKDSSPKDDVWDSVSIISFPEKEQEDVLQTL.

A signal peptide spans 1 to 21 (MRPTLLWSLLLLLGVFAAAAA). Residues 28–247 (SQLPAPQHPK…MADASTELQQ (220 aa)) are Extracellular-facing. A Fibronectin type-III 1 domain is found at 31 to 129 (PAPQHPKIRL…GALHSAWVTM (99 aa)). Asparagine 56 and asparagine 85 each carry an N-linked (GlcNAc...) asparagine glycan. A disulfide bridge connects residues cysteine 86 and cysteine 94. Asparagine 110, asparagine 137, asparagine 219, and asparagine 231 each carry an N-linked (GlcNAc...) asparagine glycan. Residues 142 to 240 (PPENIEVTPG…NISCYETMAD (99 aa)) form the Fibronectin type-III 2 domain. An intrachain disulfide couples cysteine 209 to cysteine 234. The helical transmembrane segment at 248–268 (VILISVGTFSLLSVLAGACFF) threads the bilayer. Residues 269–337 (LVLKYRGLIK…KEQEDVLQTL (69 aa)) lie on the Cytoplasmic side of the membrane. A Dileucine internalization motif motif is present at residues 276–277 (LI).

It belongs to the type II cytokine receptor family. As to quaternary structure, heterodimer with IFNGR1, to form the IFNG receptor complex. Interacts (via intracellular domain) with JAK2. Expressed in T-cells (at protein level).

It localises to the cell membrane. Its subcellular location is the cytoplasmic vesicle membrane. It is found in the golgi apparatus membrane. The protein resides in the endoplasmic reticulum membrane. The protein localises to the cytoplasm. Functionally, associates with IFNGR1 to form a receptor for the cytokine interferon gamma (IFNG). Ligand binding stimulates activation of the JAK/STAT signaling pathway. Required for signal transduction in contrast to other receptor subunit responsible for ligand binding. This Homo sapiens (Human) protein is Interferon gamma receptor 2.